A 451-amino-acid polypeptide reads, in one-letter code: MLAVTFTAAAVLSLLAASGRTLNLDVDDLQSIREATSLLATGLMDYYHGHDYGETVGKFSDPYYWWEAGGAWGSILDYWYYMENSTYNDLLTDSLLHQAGEDLSYTPWNETTTEGNDDQFFWGMAVMAAAERNFPNPPADQPQWLALAQAVFNTMALRWDMETCNGGLRWQIFRWNDGYHYKNSVSNGALFHMAARLTRYTGNATYLEWAERVYDWMYGVGLISIVQPNWHVVYDGTDINDNCTNLNKLQWTYNHGLIMAGCAFIYNHTQDELWHQRTLRFLDSARIFLSNDTLYEAGCQGGDNCNIDQRSFKAYFSRFLGLTAQLVPESRETIVRWIRASAQGAAASCSGGRDGHTCGLNWLINGWDGKWGLGEQMAALEIIQNLRCLERPAPYTAMNGGTSPGDPAAGTKTKAENLPPLDIKAGDRAGAGIITALIGSSFLACTLWLII.

Residues 1–21 (MLAVTFTAAAVLSLLAASGRT) form the signal peptide. Residues N84, N109, N203, N242, N267, and N291 are each glycosylated (N-linked (GlcNAc...) asparagine). Positions 397–419 (AMNGGTSPGDPAAGTKTKAENLP) are disordered. A lipid anchor (GPI-anchor amidated aspartate) is attached at D427. Residues 428–451 (RAGAGIITALIGSSFLACTLWLII) constitute a propeptide, removed in mature form.

Belongs to the glycosyl hydrolase 76 family.

The protein localises to the secreted. The protein resides in the cell wall. It is found in the cell membrane. The enzyme catalyses Random hydrolysis of (1-&gt;6)-alpha-D-mannosidic linkages in unbranched (1-&gt;6)-mannans.. Functionally, required for normal synthesis of the cell wall. This chain is Mannan endo-1,6-alpha-mannosidase DCW1 (DCW1), found in Eremothecium gossypii (strain ATCC 10895 / CBS 109.51 / FGSC 9923 / NRRL Y-1056) (Yeast).